Here is a 519-residue protein sequence, read N- to C-terminus: Cyclic AMP-responsive element-binding protein 3-like protein 1 (519 aa).

A required for transcriptional activation region spans residues 1–60; the sequence is MDAVLEPFPADRLFPGSSFLDLGDLNESDFLNNAHFPEHLDHFTENMEDFSNDLFSSFFD. Residues 1–374 lie on the Cytoplasmic side of the membrane; sequence MDAVLEPFPA…YKMAATQTGT (374 aa). The tract at residues 71–98 is disordered; sequence LDMELDSPTPGIQAEHSYSLSGDSAPQS. The span at 86–97 shows a compositional bias: polar residues; it reads HSYSLSGDSAPQ. Lys-184 participates in a covalent cross-link: Glycyl lysine isopeptide (Lys-Gly) (interchain with G-Cter in SUMO2). Residues 200–259 form a disordered region; sequence DLVQMPPTPPSSHGSDSDGSQSPRSLPPSSPVRPMARSSTAISTSPLLTAPHKLQGTSGP. A compositionally biased stretch (low complexity) spans 210 to 223; that stretch reads SSHGSDSDGSQSPR. Positions 236–246 are enriched in polar residues; it reads RSSTAISTSPL. The bZIP domain occupies 290-353; that stretch reads ALKRVRRKIK…RTLLQQLQKL (64 aa). Residues 292–321 are basic motif; sequence KRVRRKIKNKISAQESRRKKKEYVECLEKK. The interval 332-353 is leucine-zipper; the sequence is LWKKVETLENANRTLLQQLQKL. The chain crosses the membrane as a helical; Signal-anchor for type II membrane protein span at residues 375-395; sequence CLMVAALCFVLVLGSLVPCLP. Residues 392 to 395 carry the MBTPS2 recognition motif; it reads PCLP. Over 396 to 519 the chain is Lumenal; that stretch reads EFSSGSQTVK…LGPNTTIKLS (124 aa). An MBTPS1 recognition motif is present at residues 423–426; that stretch reads RSLL. The tract at residues 484 to 519 is disordered; the sequence is EAWPKDGGNGTSPDFSHSKEWFHDRDLGPNTTIKLS. N-linked (GlcNAc...) asparagine glycosylation occurs at Asn-492. The span at 499–510 shows a compositional bias: basic and acidic residues; the sequence is SHSKEWFHDRDL. Residue Asn-513 is glycosylated (N-linked (GlcNAc...) asparagine).

It belongs to the bZIP family. ATF subfamily. As to quaternary structure, interacts with SMAD4, the interaction takes place upon TGFB1 induction and SMAD4 acts as a CREB3L1 coactivator to induce the expression of genes involved in assembly of collagen extracellular matrix. Upon ER stress or DNA damage, translocated to the Golgi apparatus, where it is processed by regulated intramembrane proteolysis (RIP) to release the cytosol-facing N-terminal transcription factor domain. The cleavage is performed sequentially by site-1 and site-2 proteases (S1P/MBTPS1 and S2P/MBTPS2). RIP is induced by TGFB1 and ceramide. Post-translationally, N-glycosylated. In terms of processing, ubiquitinated by HRD1/SYVN1; undergoes 'Lys-48'-linked ubiquitination, followed by rapid proteasomal degradation under normal conditions. Upon ER stress, SYVN1 E3 ubiquitin-protein ligase dissociates from its substrate, ubiquitination does not occur and CREB3L1 is stabilized. As to expression, expressed in several tissues, with highest levels in pancreas and prostate. Expressed at relatively lower levels in brain.

It is found in the endoplasmic reticulum membrane. Its subcellular location is the nucleus. Functionally, precursor of the transcription factor form (Processed cyclic AMP-responsive element-binding protein 3-like protein 1), which is embedded in the endoplasmic reticulum membrane with N-terminal DNA-binding and transcription activation domains oriented toward the cytosolic face of the membrane. In response to ER stress or DNA damage, transported to the Golgi, where it is cleaved in a site-specific manner by resident proteases S1P/MBTPS1 and S2P/MBTPS2. The released N-terminal cytosolic domain is translocated to the nucleus where it activates transcription of specific target genes involved in the cell-cycle progression inhibition. In terms of biological role, transcription factor involved in cell type specific DNA damage and unfolded protein response (UPR). Binds the DNA consensus sequence 5'-GTGXGCXGC-3'. Plays a critical role in bone formation through the transcription of COL1A1, and possibly COL1A2, and the secretion of bone matrix proteins. Directly binds to the UPR element (UPRE)-like sequence in an osteoblast-specific COL1A1 promoter region and induces its transcription. Does not regulate COL1A1 in other tissues, such as skin. Required to protect astrocytes from ER stress-induced cell death. In astrocytes, binds to the cAMP response element (CRE) of the BiP/HSPA5 promoter and participate in its transcriptional activation. In astrocytes and osteoblasts, upon DNA damage, inhibits cell-cycle progression after G2/M phase by binding to promoters and activating transcription of genes encoding cell-cycle inhibitors, such as p21/CDKN1A. Required for TGFB1 to activate genes involved in the assembly of collagen extracellular matrix. (Microbial infection) May play a role in limiting virus spread by inhibiting proliferation of virus-infected cells. Upon infection with diverse DNA and RNA viruses, inhibits cell-cycle progression by binding to promoters and activating transcription of genes encoding cell-cycle inhibitors, such as p21/CDKN1A. The protein is Cyclic AMP-responsive element-binding protein 3-like protein 1 of Homo sapiens (Human).